A 376-amino-acid chain; its full sequence is Probable plastid-lipid-associated protein 3, chloroplastic (376 aa).

The N-terminal 53 residues, 1–53 (MATLFTVARPSSLLYVSSINPSKTFSPSISLKLNSLSFSFGYRPKPLRFSKIR), are a transit peptide targeting the chloroplast. The tract at residues 54–146 (SSLPSESESE…EADAGNGSAV (93 aa)) is disordered. The segment covering 85 to 96 (PDSQPDNVTVNV) has biased composition (polar residues). Basic and acidic residues predominate over residues 117–126 (MESDPPRNED).

Belongs to the PAP/fibrillin family.

The protein resides in the plastid. It is found in the chloroplast. Its subcellular location is the plastoglobule. Probably involved in light/cold stress-related jasmonate (JA) biosynthesis. This is Probable plastid-lipid-associated protein 3, chloroplastic (PAP3) from Arabidopsis thaliana (Mouse-ear cress).